The primary structure comprises 331 residues: MKISIIGGGAWGSTLAQLLTDNNHQILINEINLEYVNKINNGIHPIFNQILKDVKATVSLSETLEFSDFIVLCLPTRVMRLTLRKINKIISQPKYFINVSKGMEIENYKIIYQIVQEEITIQNIKNYACVMGPSHAEDVILRKLTLLVAASLDFSFACKVQKIFYNYNYLRVYSSNDLYGVEICSAFKNVLALISGVLDSFDFGYNFQAGFISRGLLEMAKVVDFFKGDKQTVFGLTGLGDLIVTAFNENSRNYQAGKKIGLGMEIKDIIKNSSQSIEGINNLKAFYNLSLEKKIDLPIVKEAYQMIFNYKSIKIILNNLLKRPLKLEKIF.

Tryptophan 11 and lysine 101 together coordinate NADPH. Sn-glycerol 3-phosphate is bound by residues lysine 101, glycine 132, and serine 134. Alanine 136 contacts NADPH. Sn-glycerol 3-phosphate-binding residues include lysine 188, aspartate 241, serine 251, arginine 252, and asparagine 253. Lysine 188 serves as the catalytic Proton acceptor. Residue arginine 252 coordinates NADPH. NADPH is bound at residue glutamate 278.

Belongs to the NAD-dependent glycerol-3-phosphate dehydrogenase family.

The protein localises to the cytoplasm. The enzyme catalyses sn-glycerol 3-phosphate + NAD(+) = dihydroxyacetone phosphate + NADH + H(+). It carries out the reaction sn-glycerol 3-phosphate + NADP(+) = dihydroxyacetone phosphate + NADPH + H(+). It functions in the pathway membrane lipid metabolism; glycerophospholipid metabolism. Its function is as follows. Catalyzes the reduction of the glycolytic intermediate dihydroxyacetone phosphate (DHAP) to sn-glycerol 3-phosphate (G3P), the key precursor for phospholipid synthesis. The chain is Glycerol-3-phosphate dehydrogenase [NAD(P)+] from Phytoplasma mali (strain AT).